The chain runs to 355 residues: GTP 3',8-cyclase (355 aa).

The 227-residue stretch at 16–242 folds into the Radical SAM core domain; the sequence is RYGRRATDMR…PDPRARDGAP (227 aa). GTP is bound at residue Arg25. The [4Fe-4S] cluster site is built by Cys32 and Cys36. Residue Tyr38 participates in S-adenosyl-L-methionine binding. Position 39 (Cys39) interacts with [4Fe-4S] cluster. Arg76 lines the GTP pocket. Gly80 is an S-adenosyl-L-methionine binding site. Residue Thr107 coordinates GTP. Ser131 provides a ligand contact to S-adenosyl-L-methionine. A GTP-binding site is contributed by Lys168. Residue Met202 coordinates S-adenosyl-L-methionine. [4Fe-4S] cluster-binding residues include Cys277 and Cys280. 282–284 contributes to the GTP binding site; sequence RTR. Position 294 (Cys294) interacts with [4Fe-4S] cluster.

The protein belongs to the radical SAM superfamily. MoaA family. Monomer. The cofactor is [4Fe-4S] cluster.

It catalyses the reaction GTP + AH2 + S-adenosyl-L-methionine = (8S)-3',8-cyclo-7,8-dihydroguanosine 5'-triphosphate + 5'-deoxyadenosine + L-methionine + A + H(+). Its pathway is cofactor biosynthesis; molybdopterin biosynthesis. Catalyzes, together with MoaC, the conversion of 5'-GTP to cyclic pyranopterin monophosphate (cPMP or molybdopterin precursor Z). Functionally, catalyzes the cyclization of GTP to (8S)-3',8-cyclo-7,8-dihydroguanosine 5'-triphosphate. The chain is GTP 3',8-cyclase from Paenarthrobacter nicotinovorans (Arthrobacter nicotinovorans).